Here is a 198-residue protein sequence, read N- to C-terminus: Acireductone dioxygenase (198 aa).

Fe(2+) contacts are provided by H97, H99, E103, and H141. H97, H99, E103, and H141 together coordinate Ni(2+).

The protein belongs to the acireductone dioxygenase (ARD) family. As to quaternary structure, monomer. Fe(2+) is required as a cofactor. Ni(2+) serves as cofactor.

It catalyses the reaction 1,2-dihydroxy-5-(methylsulfanyl)pent-1-en-3-one + O2 = 3-(methylsulfanyl)propanoate + CO + formate + 2 H(+). The catalysed reaction is 1,2-dihydroxy-5-(methylsulfanyl)pent-1-en-3-one + O2 = 4-methylsulfanyl-2-oxobutanoate + formate + 2 H(+). It participates in amino-acid biosynthesis; L-methionine biosynthesis via salvage pathway; L-methionine from S-methyl-5-thio-alpha-D-ribose 1-phosphate: step 5/6. Functionally, catalyzes 2 different reactions between oxygen and the acireductone 1,2-dihydroxy-3-keto-5-methylthiopentene (DHK-MTPene) depending upon the metal bound in the active site. Fe-containing acireductone dioxygenase (Fe-ARD) produces formate and 2-keto-4-methylthiobutyrate (KMTB), the alpha-ketoacid precursor of methionine in the methionine recycle pathway. Ni-containing acireductone dioxygenase (Ni-ARD) produces methylthiopropionate, carbon monoxide and formate, and does not lie on the methionine recycle pathway. This is Acireductone dioxygenase from Synechococcus elongatus (strain ATCC 33912 / PCC 7942 / FACHB-805) (Anacystis nidulans R2).